A 162-amino-acid polypeptide reads, in one-letter code: Nucleotide-binding protein Mpe_A3039 (162 aa).

This sequence belongs to the YajQ family.

In terms of biological role, nucleotide-binding protein. This chain is Nucleotide-binding protein Mpe_A3039, found in Methylibium petroleiphilum (strain ATCC BAA-1232 / LMG 22953 / PM1).